Reading from the N-terminus, the 327-residue chain is Aliphatic sulfonates import ATP-binding protein SsuB (327 aa).

The tract at residues 21 to 54 (ELAQPRIADGDAQDAAVYERDGGAHAPPDGDRAD) is disordered. Over residues 37 to 54 (VYERDGGAHAPPDGDRAD) the composition is skewed to basic and acidic residues. The ABC transporter domain maps to 66-285 (VRLTRVSKRY…ARASAAFAAL (220 aa)). 98–105 (GRSGCGKS) lines the ATP pocket. The tract at residues 300–327 (APAAPNAAGPEGASRGRAAPASGLRWAV) is disordered.

This sequence belongs to the ABC transporter superfamily. Aliphatic sulfonates importer (TC 3.A.1.17.2) family. In terms of assembly, the complex is composed of two ATP-binding proteins (SsuB), two transmembrane proteins (SsuC) and a solute-binding protein (SsuA).

It is found in the cell inner membrane. The enzyme catalyses ATP + H2O + aliphatic sulfonate-[sulfonate-binding protein]Side 1 = ADP + phosphate + aliphatic sulfonateSide 2 + [sulfonate-binding protein]Side 1.. Part of the ABC transporter complex SsuABC involved in aliphatic sulfonates import. Responsible for energy coupling to the transport system. The polypeptide is Aliphatic sulfonates import ATP-binding protein SsuB (Burkholderia pseudomallei (strain K96243)).